Here is a 211-residue protein sequence, read N- to C-terminus: Thymidylate kinase (211 aa).

11–18 (GPDGAGKT) serves as a coordination point for ATP.

This sequence belongs to the thymidylate kinase family.

It carries out the reaction dTMP + ATP = dTDP + ADP. Phosphorylation of dTMP to form dTDP in both de novo and salvage pathways of dTTP synthesis. In Streptococcus equi subsp. equi (strain 4047), this protein is Thymidylate kinase.